The primary structure comprises 37 residues: Large ribosomal subunit protein bL36 (37 aa).

Belongs to the bacterial ribosomal protein bL36 family.

The sequence is that of Large ribosomal subunit protein bL36 from Cutibacterium acnes (strain DSM 16379 / KPA171202) (Propionibacterium acnes).